A 235-amino-acid polypeptide reads, in one-letter code: Probable deoxycytidine kinase FPV151 (235 aa).

30–38 provides a ligand contact to ATP; that stretch reads GNISAGKST. Substrate-binding residues include E53, Y68, and Q79. E104 functions as the Proton acceptor in the catalytic mechanism. R105, D110, and E172 together coordinate substrate.

It belongs to the DCK/DGK family.

It carries out the reaction 2'-deoxycytidine + a ribonucleoside 5'-triphosphate = dCMP + a ribonucleoside 5'-diphosphate + H(+). The chain is Probable deoxycytidine kinase FPV151 from Vertebrata (FPV).